The primary structure comprises 217 residues: Probable transaldolase (217 aa).

Catalysis depends on Lys83, which acts as the Schiff-base intermediate with substrate.

Belongs to the transaldolase family. Type 3B subfamily.

It localises to the cytoplasm. It catalyses the reaction D-sedoheptulose 7-phosphate + D-glyceraldehyde 3-phosphate = D-erythrose 4-phosphate + beta-D-fructose 6-phosphate. It participates in carbohydrate degradation; pentose phosphate pathway; D-glyceraldehyde 3-phosphate and beta-D-fructose 6-phosphate from D-ribose 5-phosphate and D-xylulose 5-phosphate (non-oxidative stage): step 2/3. Functionally, transaldolase is important for the balance of metabolites in the pentose-phosphate pathway. In Ruegeria pomeroyi (strain ATCC 700808 / DSM 15171 / DSS-3) (Silicibacter pomeroyi), this protein is Probable transaldolase.